We begin with the raw amino-acid sequence, 282 residues long: 2-dehydro-3-deoxyphosphooctonate aldolase (282 aa).

It belongs to the KdsA family.

Its subcellular location is the cytoplasm. The catalysed reaction is D-arabinose 5-phosphate + phosphoenolpyruvate + H2O = 3-deoxy-alpha-D-manno-2-octulosonate-8-phosphate + phosphate. It participates in carbohydrate biosynthesis; 3-deoxy-D-manno-octulosonate biosynthesis; 3-deoxy-D-manno-octulosonate from D-ribulose 5-phosphate: step 2/3. It functions in the pathway bacterial outer membrane biogenesis; lipopolysaccharide biosynthesis. The protein is 2-dehydro-3-deoxyphosphooctonate aldolase of Granulibacter bethesdensis (strain ATCC BAA-1260 / CGDNIH1).